The primary structure comprises 231 residues: uncharacterized protein (231 aa).

This is an uncharacterized protein from Escherichia coli (strain K12).